Consider the following 279-residue polypeptide: Protein COP1 SUPPRESSOR 2 (279 aa).

Disordered stretches follow at residues 1–29 (MPPK…ISEE) and 57–79 (SSTA…EGEK). Residues 68 to 79 (KPVEKTETEGEK) are compositionally biased toward basic and acidic residues. Positions 86–183 (DTFAQETAVL…EETEAAKKLL (98 aa)) form a coiled coil. Over residues 217-229 (LRREHPELYKDRG) the composition is skewed to basic and acidic residues. Residues 217-279 (LRREHPELYK…KRERNRVMRR (63 aa)) are disordered. Positions 250 to 260 (ADSGKSRQAAT) are enriched in polar residues. Over residues 270–279 (KRERNRVMRR) the composition is skewed to basic residues.

This sequence belongs to the TLS1 family. Interacts with COP1.

The protein localises to the nucleus. It is found in the nucleus speckle. In terms of biological role, inhibits E3 ubiquitin-protein ligase activity of COP1, a central repressor of seedling photomorphogenesis. Represses COP1-mediated turnover of HY5 in the dark. Required for primary root development under normal light growth conditions. This is Protein COP1 SUPPRESSOR 2 from Arabidopsis thaliana (Mouse-ear cress).